The chain runs to 440 residues: Proline--tRNA ligase (440 aa).

This sequence belongs to the class-II aminoacyl-tRNA synthetase family. ProS type 2 subfamily. As to quaternary structure, homodimer.

It localises to the cytoplasm. The enzyme catalyses tRNA(Pro) + L-proline + ATP = L-prolyl-tRNA(Pro) + AMP + diphosphate. Its function is as follows. Catalyzes the attachment of proline to tRNA(Pro) in a two-step reaction: proline is first activated by ATP to form Pro-AMP and then transferred to the acceptor end of tRNA(Pro). This chain is Proline--tRNA ligase, found in Rhizobium johnstonii (strain DSM 114642 / LMG 32736 / 3841) (Rhizobium leguminosarum bv. viciae).